The sequence spans 478 residues: UDP-N-acetylmuramate--L-alanine ligase (478 aa).

112–118 contacts ATP; the sequence is GTHGKTT.

The protein belongs to the MurCDEF family.

It is found in the cytoplasm. It carries out the reaction UDP-N-acetyl-alpha-D-muramate + L-alanine + ATP = UDP-N-acetyl-alpha-D-muramoyl-L-alanine + ADP + phosphate + H(+). Its pathway is cell wall biogenesis; peptidoglycan biosynthesis. Cell wall formation. This is UDP-N-acetylmuramate--L-alanine ligase from Polaromonas naphthalenivorans (strain CJ2).